The chain runs to 374 residues: DNA replication and repair protein RecF (374 aa).

34-41 lines the ATP pocket; sequence GDNGAGKT.

Belongs to the RecF family.

It is found in the cytoplasm. Its function is as follows. The RecF protein is involved in DNA metabolism; it is required for DNA replication and normal SOS inducibility. RecF binds preferentially to single-stranded, linear DNA. It also seems to bind ATP. This chain is DNA replication and repair protein RecF, found in Rhizobium johnstonii (strain DSM 114642 / LMG 32736 / 3841) (Rhizobium leguminosarum bv. viciae).